A 58-amino-acid chain; its full sequence is MFTLKKSLLLLFFLGTINLSLCEEERNAEEERRDEPDERDVQVEKRLSPNLLKSLLGK.

The N-terminal stretch at 1-22 (MFTLKKSLLLLFFLGTINLSLC) is a signal peptide. Residues 23–46 (EEERNAEEERRDEPDERDVQVEKR) constitute a propeptide that is removed on maturation. The segment at 25-46 (ERNAEEERRDEPDERDVQVEKR) is disordered. Leucine amide is present on Leu56.

Expressed by the skin glands.

The protein localises to the secreted. Its function is as follows. Antimicrobial peptide that renders both the outer and inner membrane of bacteria permeable to hydrophobic substances of low molecular mass. In Rana temporaria (European common frog), this protein is Temporin-1Th.